Reading from the N-terminus, the 298-residue chain is ATP synthase F(1) complex subunit gamma, mitochondrial (298 aa).

The N-terminal 25 residues, 1-25 (MFSRASVVGLSACAVQPQWIQVRNM), are a transit peptide targeting the mitochondrion. Lysine 39 carries the post-translational modification N6-acetyllysine. Lysine 49 carries the N6-succinyllysine modification. Lysine 55 carries the post-translational modification N6-acetyllysine. An N6-acetyllysine; alternate modification is found at lysine 115. The residue at position 115 (lysine 115) is an N6-succinyllysine; alternate. Lysine 138 bears the N6-acetyllysine mark. Residue serine 146 is modified to Phosphoserine. Lysine 154 is subject to N6-acetyllysine; alternate. Position 154 is an N6-succinyllysine; alternate (lysine 154). Lysine 197 bears the N6-acetyllysine mark. Lysine 270 is subject to N6-succinyllysine.

This sequence belongs to the ATPase gamma chain family. In terms of assembly, component of the ATP synthase complex composed at least of ATP5F1A/subunit alpha, ATP5F1B/subunit beta, ATP5MC1/subunit c (homooctomer), MT-ATP6/subunit a, MT-ATP8/subunit 8, ATP5ME/subunit e, ATP5MF/subunit f, ATP5MG/subunit g, ATP5MK/subunit k, ATP5MJ/subunit j, ATP5F1C/subunit gamma, ATP5F1D/subunit delta, ATP5F1E/subunit epsilon, ATP5PF/subunit F6, ATP5PB/subunit b, ATP5PD/subunit d, ATP5PO/subunit OSCP. ATP synthase complex consists of a soluble F(1) head domain (subunits alpha(3) and beta(3)) - the catalytic core - and a membrane F(0) domain - the membrane proton channel (subunits c, a, 8, e, f, g, k and j). These two domains are linked by a central stalk (subunits gamma, delta, and epsilon) rotating inside the F1 region and a stationary peripheral stalk (subunits F6, b, d, and OSCP). Interacts with FLVCR2; this interaction occurs in the absence of heme and is disrupted upon heme binding.

The protein localises to the mitochondrion inner membrane. In terms of biological role, subunit gamma, of the mitochondrial membrane ATP synthase complex (F(1)F(0) ATP synthase or Complex V) that produces ATP from ADP in the presence of a proton gradient across the membrane which is generated by electron transport complexes of the respiratory chain. ATP synthase complex consist of a soluble F(1) head domain - the catalytic core - and a membrane F(1) domain - the membrane proton channel. These two domains are linked by a central stalk rotating inside the F(1) region and a stationary peripheral stalk. During catalysis, ATP synthesis in the catalytic domain of F(1) is coupled via a rotary mechanism of the central stalk subunits to proton translocation. In vivo, can only synthesize ATP although its ATP hydrolase activity can be activated artificially in vitro. With the central stalk subunit delta, is essential for the biogenesis of F(1) catalytic part of the ATP synthase complex namely in the formation of F1 assembly intermediate. This Mus musculus (Mouse) protein is ATP synthase F(1) complex subunit gamma, mitochondrial.